The following is a 444-amino-acid chain: DNA primase DnaG (444 aa).

The Toprim domain occupies 173–250 (DAILIVEGRS…YVTRAPRGLE (78 aa)). Mg(2+) contacts are provided by Glu179, Asp221, and Asp223. The disordered stretch occupies residues 302–354 (VTSSVNKTDKYSQKNESKQFKQQKNENKQVKDNSKEKTQKSTEKHNETEETHL). Positions 308 to 354 (KTDKYSQKNESKQFKQQKNENKQVKDNSKEKTQKSTEKHNETEETHL) are enriched in basic and acidic residues.

It belongs to the archaeal DnaG primase family. Forms a ternary complex with MCM helicase and DNA. Component of the archaeal exosome complex. Requires Mg(2+) as cofactor.

The enzyme catalyses ssDNA + n NTP = ssDNA/pppN(pN)n-1 hybrid + (n-1) diphosphate.. In terms of biological role, RNA polymerase that catalyzes the synthesis of short RNA molecules used as primers for DNA polymerase during DNA replication. Also part of the exosome, which is a complex involved in RNA degradation. Acts as a poly(A)-binding protein that enhances the interaction between heteromeric, adenine-rich transcripts and the exosome. This is DNA primase DnaG from Methanosphaera stadtmanae (strain ATCC 43021 / DSM 3091 / JCM 11832 / MCB-3).